Consider the following 518-residue polypeptide: Alpha-ionylideneethane synthase abl3 (518 aa).

2 disordered regions span residues Ala-294–Glu-355 and Lys-440–Lys-466. A compositionally biased stretch (low complexity) spans Thr-299–Asp-339.

This sequence belongs to the alpha-ionylideneethane synthase family.

It participates in hormone biosynthesis. Its function is as follows. Alpha-ionylideneethane synthase involved in the biosynthesis of abscisic acid (ABA), a phytohormone that acts antagonistically toward salicylic acid (SA), jasmonic acid (JA) and ethylene (ETH) signaling, to impede plant defense responses. During pathogen-host interaction, ABA plays a dual role in disease severity by increasing plant susceptibility and accelerating pathogenesis in the fungus itself. The first step of the pathway catalyzes the reaction from farnesyl diphosphate to alpha-ionylideneethane performed by the alpha-ionylideneethane synthase ABA3 via a three-step reaction mechanism involving 2 neutral intermediates, beta-farnesene and allofarnesene. The cytochrome P450 monooxygenase ABA1 might then be involved in the conversion of alpha-ionylideneethane to alpha-ionylideneacetic acid. Alpha-ionylideneacetic acid is further converted to abscisic acid in 2 steps involving the cytochrome P450 monooxygenase ABA2 and the short-chain dehydrogenase/reductase ABA4, via the intermediates 1'-deoxy-ABA or 1',4'-trans-diol-ABA, depending on the order of action of these 2 enzymes. ABA2 is responsible for the hydroxylation of carbon atom C-1' and ABA4 might be involved in the oxidation of the C-4' carbon atom. The polypeptide is Alpha-ionylideneethane synthase abl3 (Pyricularia oryzae (strain Y34) (Rice blast fungus)).